The following is a 222-amino-acid chain: Beta-casein (222 aa).

An N-terminal signal peptide occupies residues 1 to 15; the sequence is MKVLILACLVALALA. A Phosphothreonine modification is found at Thr-27. Residues Ser-30, Ser-32, Ser-33, and Ser-34 each carry the phosphoserine modification.

The protein belongs to the beta-casein family. Mammary gland specific. Secreted in milk.

Its subcellular location is the secreted. Its function is as follows. Important role in determination of the surface properties of the casein micelles. The polypeptide is Beta-casein (CSN2) (Ovis aries (Sheep)).